Reading from the N-terminus, the 227-residue chain is Triggering receptor expressed on myeloid cells 2 (227 aa).

The signal sequence occupies residues 1-18 (MGPLHQFLLLLITALSQA). Topologically, residues 19 to 171 (LNTTVLQGMA…NQETSFPPTS (153 aa)) are extracellular. An N-linked (GlcNAc...) asparagine glycan is attached at asparagine 20. Residues 29–112 (GQSLRVSCTY…GDAGLYQCQS (84 aa)) form the Ig-like V-type domain. Cystine bridges form between cysteine 36–cysteine 110 and cysteine 51–cysteine 60. Histidine 67 is an a 1,2-diacyl-sn-glycero-3-phospho-L-serine binding site. An N-linked (GlcNAc...) asparagine glycan is attached at asparagine 79. Threonine 88 lines the a 1,2-diacyl-sn-glycero-3-phospho-L-serine pocket. The chain crosses the membrane as a helical span at residues 172 to 192 (ILLLLACVLLSKFLAASILWA). Topologically, residues 193-227 (VARGRQKPGTPVVRGLDCGQDAGHQLQILTGPGGT) are cytoplasmic.

Monomer. After ectodomain shedding, the extracellular domain oligomerizes, which is enhanced and stabilized by binding of phosphatidylserine. Interacts with TYROBP/DAP12. Interaction with TYROBP is required for stabilization of the TREM2 C-terminal fragment (TREM2-CTF) which is produced by proteolytic processing. Interacts with PLXNA1 (via TIG domains); the interaction mediates SEMA6D binding and signaling through TYROBP. Undergoes ectodomain shedding through proteolytic cleavage by ADAM10 and ADAM17 to produce a transmembrane segment, the TREM2 C-terminal fragment (TREM2-CTF), which is subsequently cleaved by gamma-secretase. As to expression, expressed in the brain, specifically in microglia (at protein level). Expressed in macrophages (at protein level). Expressed at higher levels in the CNS, heart and lung than in lymph nodes or in other non-lymphoid tissues such as kidney, liver and testis. In the CNS not all microglia express TREM2. Brain regions with an incomplete blood-brain barrier had the lowest percentages of TREM2 expressing microglia, whereas the lateral entorhinal and cingulate cortex had the highest percentages.

Its subcellular location is the cell membrane. It is found in the secreted. Forms a receptor signaling complex with TYROBP which mediates signaling and cell activation following ligand binding. Acts as a receptor for amyloid-beta protein 42, a cleavage product of the amyloid-beta precursor protein APP, and mediates its uptake and degradation by microglia. Binding to amyloid-beta 42 mediates microglial activation, proliferation, migration, apoptosis and expression of pro-inflammatory cytokines, such as IL6R and CCL3, and the anti-inflammatory cytokine ARG1. Acts as a receptor for lipoprotein particles such as LDL, VLDL, and HDL and for apolipoproteins such as APOA1, APOA2, APOB, APOE, APOE2, APOE3, APOE4, and CLU and enhances their uptake in microglia. Binds phospholipids (preferably anionic lipids) such as phosphatidylserine, phosphatidylethanolamine, phosphatidylglycerol and sphingomyelin. Regulates microglial proliferation by acting as an upstream regulator of the Wnt/beta-catenin signaling cascade. Required for microglial phagocytosis of apoptotic neurons. Also required for microglial activation and phagocytosis of myelin debris after neuronal injury and of neuronal synapses during synapse elimination in the developing brain. Regulates microglial chemotaxis and process outgrowth, and also the microglial response to oxidative stress and lipopolysaccharide. It suppresses PI3K and NF-kappa-B signaling in response to lipopolysaccharide; thus promoting phagocytosis, suppressing pro-inflammatory cytokine and nitric oxide production, inhibiting apoptosis and increasing expression of IL10 and TGFB. During oxidative stress, it promotes anti-apoptotic NF-kappa-B signaling and ERK signaling. Plays a role in microglial MTOR activation and metabolism. Regulates age-related changes in microglial numbers. Triggers activation of the immune responses in macrophages and dendritic cells. Mediates cytokine-induced formation of multinucleated giant cells which are formed by the fusion of macrophages. In dendritic cells, receptor of SEMA6D with PLEXNA1 as coreceptor and mediates up-regulation of chemokine receptor CCR7 and dendritic cell maturation and survival. Involved in the positive regulation of osteoclast differentiation. The sequence is that of Triggering receptor expressed on myeloid cells 2 (Trem2) from Mus musculus (Mouse).